Consider the following 870-residue polypeptide: Probable inorganic carbon transporter subunit DabA (870 aa).

Zn(2+) is bound by residues C381, D383, H564, and C579.

It belongs to the inorganic carbon transporter (TC 9.A.2) DabA family. In terms of assembly, forms a complex with DabB. Requires Zn(2+) as cofactor.

It localises to the cell membrane. Its function is as follows. Part of an energy-coupled inorganic carbon pump. The protein is Probable inorganic carbon transporter subunit DabA of Geobacillus kaustophilus (strain HTA426).